The primary structure comprises 141 residues: UPF0179 protein Cmaq_1008 (141 aa).

Belongs to the UPF0179 family.

The chain is UPF0179 protein Cmaq_1008 from Caldivirga maquilingensis (strain ATCC 700844 / DSM 13496 / JCM 10307 / IC-167).